Here is a 161-residue protein sequence, read N- to C-terminus: N5-carboxyaminoimidazole ribonucleotide mutase (161 aa).

Substrate-binding residues include Ser9, Asp12, and Arg39.

This sequence belongs to the AIR carboxylase family. Class I subfamily.

The enzyme catalyses 5-carboxyamino-1-(5-phospho-D-ribosyl)imidazole + H(+) = 5-amino-1-(5-phospho-D-ribosyl)imidazole-4-carboxylate. Its pathway is purine metabolism; IMP biosynthesis via de novo pathway; 5-amino-1-(5-phospho-D-ribosyl)imidazole-4-carboxylate from 5-amino-1-(5-phospho-D-ribosyl)imidazole (N5-CAIR route): step 2/2. Its function is as follows. Catalyzes the conversion of N5-carboxyaminoimidazole ribonucleotide (N5-CAIR) to 4-carboxy-5-aminoimidazole ribonucleotide (CAIR). In Vibrio parahaemolyticus serotype O3:K6 (strain RIMD 2210633), this protein is N5-carboxyaminoimidazole ribonucleotide mutase.